We begin with the raw amino-acid sequence, 315 residues long: O-antigen chain rhamnosyltransferase WbaN (315 aa).

It belongs to the glycosyltransferase 2 family.

The catalysed reaction is alpha-D-galactosyl-di-trans,octa-cis-undecaprenyl diphosphate + dTDP-beta-L-rhamnose = alpha-L-rhamnosyl-(1-&gt;3)-alpha-D-galactosyl-1-diphospho-di-trans,octa-cis-undecaprenol + dTDP + H(+). It participates in bacterial outer membrane biogenesis; LPS O-antigen biosynthesis. Rhamnosyltransferase involved in the biosynthesis of the repeat unit of the lipopolysaccharide (LPS) O-antigen region. Catalyzes the addition of a rhamnose to the galactosyl-undecaprenyl diphosphate intermediate. This chain is O-antigen chain rhamnosyltransferase WbaN, found in Salmonella anatum.